Here is a 446-residue protein sequence, read N- to C-terminus: Tubulin beta chain (446 aa).

Residues Gln11, Glu69, Ser138, Gly142, Thr143, Gly144, Asn204, and Asn226 each coordinate GTP. Glu69 contributes to the Mg(2+) binding site. The disordered stretch occupies residues 425–446; that stretch reads YQEASISEGEEEYPEEVSNEEE. The segment covering 432–446 has biased composition (acidic residues); that stretch reads EGEEEYPEEVSNEEE.

The protein belongs to the tubulin family. In terms of assembly, dimer of alpha and beta chains. A typical microtubule is a hollow water-filled tube with an outer diameter of 25 nm and an inner diameter of 15 nM. Alpha-beta heterodimers associate head-to-tail to form protofilaments running lengthwise along the microtubule wall with the beta-tubulin subunit facing the microtubule plus end conferring a structural polarity. Microtubules usually have 13 protofilaments but different protofilament numbers can be found in some organisms and specialized cells. Mg(2+) serves as cofactor.

It is found in the cytoplasm. The protein resides in the cytoskeleton. In terms of biological role, tubulin is the major constituent of microtubules, a cylinder consisting of laterally associated linear protofilaments composed of alpha- and beta-tubulin heterodimers. Microtubules grow by the addition of GTP-tubulin dimers to the microtubule end, where a stabilizing cap forms. Below the cap, tubulin dimers are in GDP-bound state, owing to GTPase activity of alpha-tubulin. This Blumeria hordei (Barley powdery mildew) protein is Tubulin beta chain (TUB2).